The chain runs to 288 residues: Ankyrin repeat and SOCS box protein 8 (288 aa).

At serine 17 the chain carries Phosphoserine. ANK repeat units follow at residues 52-81, 85-113, 117-146, and 150-179; these read GTLK…EVNA, YNRT…NPNA, NRDT…SVNA, and NNDT…EVRV. In terms of domain architecture, SOCS box spans 235–288; sequence QLCEKLTVLCSAPGTLKTLARYAVRRSLGLQYLPDAVKGLPLPASLKEYLLLLE.

The protein belongs to the ankyrin SOCS box (ASB) family. In terms of assembly, interacts with TBK1; this interaction promotes TBK1 proteasomal degradation. In terms of processing, phosphorylated by TBK1.

It is found in the cytoplasm. The protein operates within protein modification; protein ubiquitination. In terms of biological role, may be a substrate-recognition component of a SCF-like ECS (Elongin-Cullin-SOCS-box protein) E3 ubiquitin-protein ligase complex which mediates the ubiquitination and subsequent proteasomal degradation of target proteins. Inhibits IFN-beta production through the IRF3 signaling pathway by targeting TBK1 via 'Lys-48'-linked ubiquitination, leading to its proteasomal degradation. The polypeptide is Ankyrin repeat and SOCS box protein 8 (ASB8) (Macaca fascicularis (Crab-eating macaque)).